We begin with the raw amino-acid sequence, 247 residues long: Ubiquinone biosynthesis O-methyltransferase (247 aa).

The S-adenosyl-L-methionine site is built by arginine 41, glycine 72, aspartate 93, and methionine 136.

It belongs to the methyltransferase superfamily. UbiG/COQ3 family.

The catalysed reaction is a 3-demethylubiquinol + S-adenosyl-L-methionine = a ubiquinol + S-adenosyl-L-homocysteine + H(+). It catalyses the reaction a 3-(all-trans-polyprenyl)benzene-1,2-diol + S-adenosyl-L-methionine = a 2-methoxy-6-(all-trans-polyprenyl)phenol + S-adenosyl-L-homocysteine + H(+). The protein operates within cofactor biosynthesis; ubiquinone biosynthesis. O-methyltransferase that catalyzes the 2 O-methylation steps in the ubiquinone biosynthetic pathway. This chain is Ubiquinone biosynthesis O-methyltransferase, found in Bartonella tribocorum (strain CIP 105476 / IBS 506).